The following is a 599-amino-acid chain: Crinkler effector protein 8 (599 aa).

The signal sequence occupies residues 1 to 17 (MVTLFCAVVGVAGSTFP). Residues 18–52 (VDINENKSVGHLKKAIKEEKMYQFPADELQLFLAK) form an LQLFLAK domain region. Asparagine 23 carries N-linked (GlcNAc...) asparagine glycosylation. Residues 53 to 109 (AGGNAWLSSLTEDVKKLKKGEKTALVKSLTQEEKELQGEDPISECLEGMDPPKVKQI) are DWL domain. Positions 110–116 (HVLVALP) match the HVLVXXP motif motif. Positions 117 to 590 (PGTSSAPISD…EAAEQESQGK (474 aa)) are C-terminal D2 effector domain. Residues serine 249, serine 281, and serine 385 each carry the phosphoserine modification. Residues 289–590 (LSKKLVWSYG…EAAEQESQGK (302 aa)) form the Protein kinase domain. The active-site Proton acceptor is the aspartate 470. A phosphoserine mark is found at serine 474 and serine 587. Positions 577–599 (RFEREAAEQESQGKGVRKKHRRA) are disordered. The Host nuclear localization signal motif lies at 590–599 (KGVRKKHRRA).

It in the N-terminal section; belongs to the Crinkler effector family. In the C-terminal section; belongs to the protein kinase superfamily. As to quaternary structure, dimerizes in host plants. In terms of processing, autophosphorylated at Ser-249, Ser-281, Ser-385, Ser-474 and Ser-587. Additional serines or threonines are also targeted for phosphorylation.

It localises to the secreted. The protein localises to the host nucleus. It catalyses the reaction L-seryl-[protein] + ATP = O-phospho-L-seryl-[protein] + ADP + H(+). It carries out the reaction L-threonyl-[protein] + ATP = O-phospho-L-threonyl-[protein] + ADP + H(+). In terms of biological role, secreted effector that induces cell death when expressed in host plants. Acts as a kinase and is able to autophosphorylate, however its cell death inducing ability is not a direct result of its kinase activity, but rather a consequence of the phosphorylated state of the five identified serine residues in the CRN8 protein. The chain is Crinkler effector protein 8 from Phytophthora infestans (Potato late blight agent).